The sequence spans 201 residues: ATP-dependent dethiobiotin synthetase BioD (201 aa).

11 to 16 provides a ligand contact to ATP; that stretch reads DVGKTH. Thr-15 is a binding site for Mg(2+). The active site involves Lys-31. Residues Asp-40 and 93–96 contribute to the ATP site; that span reads ELAG. 2 residues coordinate Mg(2+): Asp-40 and Glu-93.

The protein belongs to the dethiobiotin synthetase family. Homodimer. Mg(2+) serves as cofactor.

It localises to the cytoplasm. The catalysed reaction is (7R,8S)-7,8-diammoniononanoate + CO2 + ATP = (4R,5S)-dethiobiotin + ADP + phosphate + 3 H(+). Its pathway is cofactor biosynthesis; biotin biosynthesis; biotin from 7,8-diaminononanoate: step 1/2. Functionally, catalyzes a mechanistically unusual reaction, the ATP-dependent insertion of CO2 between the N7 and N8 nitrogen atoms of 7,8-diaminopelargonic acid (DAPA, also called 7,8-diammoniononanoate) to form a ureido ring. The polypeptide is ATP-dependent dethiobiotin synthetase BioD (Campylobacter jejuni subsp. jejuni serotype O:6 (strain 81116 / NCTC 11828)).